Reading from the N-terminus, the 372-residue chain is G patch domain and ankyrin repeat-containing protein 1 (372 aa).

The tract at residues 74 to 110 (DSSSSKPQRAEPMRERKKKRRRVTREPAAAGVPRQGR) is disordered. ANK repeat units lie at residues 124 to 155 (LAAQNGDLTELRRLLEPQEAGGAGGNINARDA) and 156 to 186 (FWWTPLMCAARAGQGAAVRYLLGRGAAWVGV). Disordered stretches follow at residues 211 to 233 (RESHGETRSPENQNRSTPSSSQF) and 251 to 271 (AHLLSLSRRPQPSNLPLGVPT). Polar residues predominate over residues 220-233 (PENQNRSTPSSSQF). One can recognise a G-patch domain in the interval 271 to 317 (TSSPGFRLLLRGGWEPGMGLGPRGEGRANPIPTILKRDQEGLGYRSP). Lysine 306 participates in a covalent cross-link: Glycyl lysine isopeptide (Lys-Gly) (interchain with G-Cter in SUMO2). Composition is skewed to basic and acidic residues over residues 330–340 (TRAVSGRERVP) and 348–357 (RENRRQEEKG). Residues 330 to 357 (TRAVSGRERVPRVATLSQRENRRQEEKG) form a disordered region.

The chain is G patch domain and ankyrin repeat-containing protein 1 (Gpank1) from Mus musculus (Mouse).